The primary structure comprises 304 residues: Protoheme IX farnesyltransferase (304 aa).

9 consecutive transmembrane segments (helical) span residues 32-52 (VVAL…PGSV), 54-74 (LQPL…AAAF), 104-124 (ALTF…TLVN), 126-146 (LTAW…TAYL), 154-174 (IVVG…SVTG), 180-200 (ALLL…ALAI), 226-246 (CILL…LVGM), 247-267 (CGPV…YKAW), and 284-304 (FSIY…YLWV).

It belongs to the UbiA prenyltransferase family. Protoheme IX farnesyltransferase subfamily.

It localises to the cell inner membrane. It carries out the reaction heme b + (2E,6E)-farnesyl diphosphate + H2O = Fe(II)-heme o + diphosphate. It functions in the pathway porphyrin-containing compound metabolism; heme O biosynthesis; heme O from protoheme: step 1/1. Functionally, converts heme B (protoheme IX) to heme O by substitution of the vinyl group on carbon 2 of heme B porphyrin ring with a hydroxyethyl farnesyl side group. The chain is Protoheme IX farnesyltransferase from Shewanella sediminis (strain HAW-EB3).